The sequence spans 249 residues: 5'-nucleotidase SurE (249 aa).

Residues Asp-9, Asp-10, Ser-40, and Asn-92 each contribute to the a divalent metal cation site.

The protein belongs to the SurE nucleotidase family. A divalent metal cation serves as cofactor.

It localises to the cytoplasm. The enzyme catalyses a ribonucleoside 5'-phosphate + H2O = a ribonucleoside + phosphate. Nucleotidase that shows phosphatase activity on nucleoside 5'-monophosphates. The polypeptide is 5'-nucleotidase SurE (Shewanella sp. (strain ANA-3)).